Reading from the N-terminus, the 87-residue chain is MSQRNQRKVYVGRVVSDKMDKTITVLVETYKKHPLYGKRVKYSKKYKAHDEHNIAKVGDIVKIMETRPLSATKRFRLVEVIEKAVVL.

It belongs to the universal ribosomal protein uS17 family. Part of the 30S ribosomal subunit.

One of the primary rRNA binding proteins, it binds specifically to the 5'-end of 16S ribosomal RNA. The sequence is that of Small ribosomal subunit protein uS17 from Geobacillus kaustophilus (strain HTA426).